Consider the following 397-residue polypeptide: Presenilin-like protein At2g29900 (397 aa).

The Cytoplasmic portion of the chain corresponds to 1–17 (MDRNQRPRSILDSLGEE). The helical transmembrane segment at 18–38 (LIAILTPVSICMFTVVLLVCI) threads the bilayer. At 39–76 (LNSDPSSSSASFSSIATAAYSESDSDSSWDKFVGALLN) the chain is on the lumenal side. The helical transmembrane segment at 77-97 (SVVFVAAITVATFVLVLLFYL) threads the bilayer. Residues 98–106 (RCVKFLKFY) lie on the Cytoplasmic side of the membrane. The helical transmembrane segment at 107 to 127 (MGFSAFIVLGNLGGEILVLLI) threads the bilayer. The Lumenal portion of the chain corresponds to 128–135 (DRFRFPID). A helical membrane pass occupies residues 136-156 (SITFLILLFNFSVVGVFAVFM). Residues 157 to 158 (SK) are Cytoplasmic-facing. A helical transmembrane segment spans residues 159–179 (FSILITQGYLVWIGVLVAYFF). Topologically, residues 180–188 (TLLPEWTTW) are lumenal. A helical membrane pass occupies residues 189–209 (VLLVALALYDIAAVLLPVGPL). Residue Asp-198 is part of the active site. At 210-305 (RLLVEMAISR…NSETFLEGIG (96 aa)) the chain is on the cytoplasmic side. The helical transmembrane segment at 306 to 326 (LGSSGAIKLGLGDFIFYSVLV) threads the bilayer. Residue Asp-318 is part of the active site. The Lumenal segment spans residues 327–336 (GRAAMYDLMT). A helical transmembrane segment spans residues 337–357 (VYACYLAIIAGLGITLMLLSV). The Cytoplasmic portion of the chain corresponds to 358-366 (YQKALPALP). The PAL signature appears at 363 to 365 (PAL). Positions 367 to 387 (VSIMLGVVFYFLARLLLEVFV) form an intramembrane region, helical. At 388 to 397 (VQCSSNLVMF) the chain is on the cytoplasmic side.

This sequence belongs to the peptidase A22A family. Homodimer. Probable component of the gamma-secretase complex, a complex composed of a presenilin homodimer, nicastrin, APH1 and PEN2.

The protein localises to the endoplasmic reticulum membrane. It localises to the golgi apparatus membrane. In terms of biological role, probable subunit of the gamma-secretase complex, an endoprotease complex that catalyzes the intramembrane cleavage of integral membrane proteins such as Notch receptors. The polypeptide is Presenilin-like protein At2g29900 (Arabidopsis thaliana (Mouse-ear cress)).